Reading from the N-terminus, the 492-residue chain is N-succinylglutamate 5-semialdehyde dehydrogenase (492 aa).

Residue 220-225 (GSASTG) participates in NAD(+) binding. Catalysis depends on residues glutamate 243 and cysteine 277.

This sequence belongs to the aldehyde dehydrogenase family. AstD subfamily.

It catalyses the reaction N-succinyl-L-glutamate 5-semialdehyde + NAD(+) + H2O = N-succinyl-L-glutamate + NADH + 2 H(+). The protein operates within amino-acid degradation; L-arginine degradation via AST pathway; L-glutamate and succinate from L-arginine: step 4/5. Catalyzes the NAD-dependent reduction of succinylglutamate semialdehyde into succinylglutamate. In Salmonella paratyphi A (strain AKU_12601), this protein is N-succinylglutamate 5-semialdehyde dehydrogenase.